The following is a 430-amino-acid chain: 3-phosphoshikimate 1-carboxyvinyltransferase (430 aa).

Residues lysine 20, serine 21, and arginine 25 each coordinate 3-phosphoshikimate. Lysine 20 serves as a coordination point for phosphoenolpyruvate. Residues glycine 92 and arginine 120 each coordinate phosphoenolpyruvate. Residues serine 166, glutamine 168, aspartate 312, and lysine 339 each coordinate 3-phosphoshikimate. Glutamine 168 is a binding site for phosphoenolpyruvate. Residue aspartate 312 is the Proton acceptor of the active site. Phosphoenolpyruvate is bound by residues arginine 343 and arginine 387.

This sequence belongs to the EPSP synthase family. As to quaternary structure, monomer.

Its subcellular location is the cytoplasm. It catalyses the reaction 3-phosphoshikimate + phosphoenolpyruvate = 5-O-(1-carboxyvinyl)-3-phosphoshikimate + phosphate. The protein operates within metabolic intermediate biosynthesis; chorismate biosynthesis; chorismate from D-erythrose 4-phosphate and phosphoenolpyruvate: step 6/7. Functionally, catalyzes the transfer of the enolpyruvyl moiety of phosphoenolpyruvate (PEP) to the 5-hydroxyl of shikimate-3-phosphate (S3P) to produce enolpyruvyl shikimate-3-phosphate and inorganic phosphate. This chain is 3-phosphoshikimate 1-carboxyvinyltransferase, found in Lactococcus lactis subsp. lactis (strain IL1403) (Streptococcus lactis).